The primary structure comprises 464 residues: MGTIYLFRKTQRSLLGKLTQEFRLVTADRRSWKILLFGAINVVCTGFLLTWCSSTNSMALTAYTYLTIFDLFSLITCLISYWVMMKKPSPTYSFGFERFEVLSVFASTVLAQLGALFILKESAERFVEQPEIHTGRLLVGTFVALCFNLFSMLSIRNKPFAYVSEAASTSWLQEHVADLSRSLCGIIPGLSSIFLPRMNPFVLIDIAGALALCITYMLIEINNYFAVDTASAIAIAVMTFGTMYPMSVYSGKVLLQTTPPHVIGQLDKLLREVSTLDGVLEVRNEHFWTLGFGTMAGSVHVRIRRDANEQMVLAHVTNRLNTLVSSLTVQIFKDEWARPVLASGAMPPNMLNIPDHHVIQMPSLKSTMDELNPMTSTPSKPSSPPPEFAFNTPGKNMNPVILSNNQTRPSGVGFNYGTTPYTTTFNHGLGVPGIGNTQGLRTGLTNVANRYGTYTPGQFTQFKQ.

The Cytoplasmic portion of the chain corresponds to M1–K33. The helical transmembrane segment at I34 to S54 threads the bilayer. The Extracellular segment spans residues T55–T64. The chain crosses the membrane as a helical span at residues Y65–M85. Over K86 to R98 the chain is Cytoplasmic. A helical membrane pass occupies residues F99–L119. The Extracellular portion of the chain corresponds to K120–T134. Residues G135 to I155 traverse the membrane as a helical segment. Residues R156 to P200 lie on the Cytoplasmic side of the membrane. The chain crosses the membrane as a helical span at residues F201 to I221. Residues N222–D228 lie on the Extracellular side of the membrane. A helical membrane pass occupies residues T229 to Y249. At S250 to Q464 the chain is on the cytoplasmic side.

Belongs to the cation diffusion facilitator (CDF) transporter (TC 2.A.4) family. SLC30A subfamily. In terms of assembly, heterodimer with SLC30A5; form a functional zinc ion transmembrane transporter.

The protein localises to the golgi apparatus. It localises to the trans-Golgi network membrane. Its function is as follows. Has probably no intrinsic transporter activity but together with SLC30A5 forms a functional zinc ion:proton antiporter heterodimer, mediating zinc entry into the lumen of organelles along the secretory pathway. As part of that zinc ion:proton antiporter, contributes to zinc ion homeostasis within the early secretory pathway and regulates the activation and folding of enzymes like alkaline phosphatases and enzymes involved in phosphatidylinositol glycan anchor biosynthesis. This chain is Zinc transporter 6 (slc30a6), found in Xenopus tropicalis (Western clawed frog).